The sequence spans 459 residues: MHNIHRRNFLKAAGAATAGLVTANIALSAYASSVAPKPQAGKSVIGLIAPKMDVVRVGFIGVGERGFSHVEQFCHLEGVELKAICDTHQAVLDRAVDHIVKQNRPKPAVYTGNDLSYRDLLSRDDIDIVIISTPWEWHAPMAIETMESGKHAFVEVPMALTVEECWQVVDTAERTQKNCMMMENVNYGREELMVLNMVRQGVFGELLHGEAAYIHELRWQMKEIDHKTGSWRTYWHTKRNGNLYPTHGLGPVSQYMNINRGDRFDYLTSMSSPALGRALYAKREFPADHERNQLKYINGDINTSLIKTVKGRTIMVQHDTTTPRPYSRHNLIQGTNGVFAGFPNRIAVENGGFGQSYHEWDMDMQKWYDKYDHPLWQRIGKEAEINGGHGGMDFVMLWRMIYCLRNGETLDQDVYDGASWSVVNILSEHSLNDRSNSVTFPDFTRGAWQTAKPLGIIGA.

The tat-type signal signal peptide spans 1–31; the sequence is MHNIHRRNFLKAAGAATAGLVTANIALSAYA. Residues 64 to 65, Asp-86, 135 to 138, 155 to 156, and Asn-184 contribute to the NAD(+) site; these read ER, WEWH, and EV. Substrate contacts are provided by residues Tyr-213, Arg-232, 244 to 247, and Tyr-326; that span reads YPTH. Tyr-244 provides a ligand contact to NAD(+).

It belongs to the Gfo/Idh/MocA family. Glycosyl hydrolase 109 subfamily. NAD(+) serves as cofactor. In terms of processing, predicted to be exported by the Tat system. The position of the signal peptide cleavage has not been experimentally proven.

In terms of biological role, glycosidase. This Shewanella baltica (strain OS185) protein is Glycosyl hydrolase family 109 protein.